We begin with the raw amino-acid sequence, 134 residues long: MAIKPVAHKKIIKKRTKKFVRFESEDFAKLDSSWRRPRGIDNRVRRRFRGQRRMAKIGFASDAATKHLLPNGFKKFLIRNPADLEILLMNNRTYCGEIAHNISAQVKAALVKRAAELGVRLTNANAKVKVQESA.

This sequence belongs to the eukaryotic ribosomal protein eL32 family.

The chain is Large ribosomal subunit protein eL32 (RPL32) from Tetrahymena thermophila (strain SB210).